A 461-amino-acid chain; its full sequence is Siroheme synthase (461 aa).

Residues methionine 1–valine 204 form a precorrin-2 dehydrogenase /sirohydrochlorin ferrochelatase region. NAD(+) is bound by residues glutamate 22 to valine 23 and glycine 43 to arginine 44. Position 128 is a phosphoserine (serine 128). The uroporphyrinogen-III C-methyltransferase stretch occupies residues glycine 216–alanine 461. Proline 225 contacts S-adenosyl-L-methionine. Catalysis depends on aspartate 248, which acts as the Proton acceptor. Catalysis depends on lysine 270, which acts as the Proton donor. Residues glycine 301 to aspartate 303, isoleucine 306, threonine 331 to alanine 332, methionine 382, and glycine 411 contribute to the S-adenosyl-L-methionine site.

The protein in the N-terminal section; belongs to the precorrin-2 dehydrogenase / sirohydrochlorin ferrochelatase family. It in the C-terminal section; belongs to the precorrin methyltransferase family.

It catalyses the reaction uroporphyrinogen III + 2 S-adenosyl-L-methionine = precorrin-2 + 2 S-adenosyl-L-homocysteine + H(+). The catalysed reaction is precorrin-2 + NAD(+) = sirohydrochlorin + NADH + 2 H(+). The enzyme catalyses siroheme + 2 H(+) = sirohydrochlorin + Fe(2+). Its pathway is cofactor biosynthesis; adenosylcobalamin biosynthesis; precorrin-2 from uroporphyrinogen III: step 1/1. It functions in the pathway cofactor biosynthesis; adenosylcobalamin biosynthesis; sirohydrochlorin from precorrin-2: step 1/1. It participates in porphyrin-containing compound metabolism; siroheme biosynthesis; precorrin-2 from uroporphyrinogen III: step 1/1. The protein operates within porphyrin-containing compound metabolism; siroheme biosynthesis; siroheme from sirohydrochlorin: step 1/1. Its pathway is porphyrin-containing compound metabolism; siroheme biosynthesis; sirohydrochlorin from precorrin-2: step 1/1. Functionally, multifunctional enzyme that catalyzes the SAM-dependent methylations of uroporphyrinogen III at position C-2 and C-7 to form precorrin-2 via precorrin-1. Then it catalyzes the NAD-dependent ring dehydrogenation of precorrin-2 to yield sirohydrochlorin. Finally, it catalyzes the ferrochelation of sirohydrochlorin to yield siroheme. The polypeptide is Siroheme synthase (Edwardsiella ictaluri (strain 93-146)).